Consider the following 257-residue polypeptide: Transmembrane protein C257L (257 aa).

Helical transmembrane passes span Leu123 to Leu143 and Met163 to Val183.

Belongs to the asfivirus C257R family.

Its subcellular location is the host membrane. The protein resides in the virion. The chain is Transmembrane protein C257L from African swine fever virus (isolate Warthog/Namibia/Wart80/1980) (ASFV).